The primary structure comprises 665 residues: Intraflagellar transport protein 70B (665 aa).

TPR repeat units lie at residues 11–44 (DGEF…SPRS), 45–78 (RAGL…HPEL), 154–187 (TDGQ…SGYQ), 189–221 (DLSY…GIRQ), 393–424 (LTIQ…EKYI), 425–457 (PVLM…CNDH), and 459–492 (VWKL…HYDN). Positions 130 to 154 (PGSRSLVEQLPSREGGEESGGENET) are disordered. The stretch at 508–535 (YIMTSQNEEAEELMRKIEKEEEQLSYDD) forms a coiled coil. The stretch at 544–577 (CIVNLVIGTLYCAKGNYDFGISRVIKSLEPYNKK) is one TPR 8 repeat.

The protein belongs to the TTC30/dfy-1/fleer family. In terms of assembly, interacts with the IFT B complex components IFT27, IFT46, IFT74, IFT52, IFT57, IFT80, IFT81 and IFT88. Interacts with KIF17.

The protein resides in the cell projection. It localises to the cilium. In terms of biological role, required for polyglutamylation of axonemal tubulin. Plays a role in anterograde intraflagellar transport (IFT), the process by which cilia precursors are transported from the base of the cilium to the site of their incorporation at the tip. The sequence is that of Intraflagellar transport protein 70B from Homo sapiens (Human).